Reading from the N-terminus, the 2367-residue chain is Probable G-protein coupled receptor 179 (2367 aa).

An N-terminal signal peptide occupies residues 1–25 (MGTRGAVMPPPMWGLLGCCFVCAWA). Over 26–381 (LGGPRPIRSL…CLVEEAAVLR (356 aa)) the chain is Extracellular. The segment at 62 to 245 (YLYSGDAQQL…CQEGRLRPGW (184 aa)) is cache-like region. N-linked (GlcNAc...) asparagine glycosylation is present at Asn75. A disulfide bond links Cys76 and Cys236. A glycan (N-linked (GlcNAc...) asparagine) is linked at Asn298. Residues 382 to 402 (AAVLACQACCMLAIFLSMLVS) traverse the membrane as a helical segment. Topologically, residues 403-415 (YRCRRNKRIWASG) are cytoplasmic. Residues 416–436 (VVLLETVLFGFLLLYFPVFIL) form a helical membrane-spanning segment. Over 437–444 (YFKPSVFR) the chain is Extracellular. The chain crosses the membrane as a helical span at residues 445-465 (CIALRWVRLLGFAIVYGTIIL). Residues Cys445 and Cys537 are joined by a disulfide bond. Topologically, residues 466 to 493 (KLYRVLQLFLSRTAQRSALLSSGRLLRR) are cytoplasmic. Residues 494–514 (LGLLLLPVLGFLAVWTVGALE) traverse the membrane as a helical segment. Topologically, residues 515-543 (RGIQHAPLVIRGHTPSGRHFYLCHHDRWD) are extracellular. The chain crosses the membrane as a helical span at residues 544–564 (YIMVVAELLLLCWGSFLCYAT). The Cytoplasmic portion of the chain corresponds to 565–575 (RAVLSAFHEPR). Residues 576 to 594 (YMGIALHNELLLSAAFHTA) traverse the membrane as a helical segment. The Extracellular portion of the chain corresponds to 595-607 (RFVLVPSLHPDWT). A helical transmembrane segment spans residues 608–628 (LLLFFFHTHSTVTTTLALIFI). Topologically, residues 629 to 2367 (PKFWKLGAPP…PPTVYPWDWE (1739 aa)) are cytoplasmic. 12 disordered regions span residues 731-818 (ARQH…FRSA), 869-932 (REER…PHPP), 1039-1083 (KSRA…QQGS), 1098-1198 (RSTY…AGKT), 1247-1431 (EVTE…CPWE), 1537-1557 (PRESTVPGHSSPCLDNSSSKA), 1577-1672 (DLRP…ERPQ), 1723-1757 (AIRKSPNDTGKVSADLGPRERAVTAPEKPQKPTPE), 1823-1852 (SEGTTGKGLDQKAGSESAEQREKALEKGRL), 1886-2108 (AQAP…GSVE), 2133-2212 (WEAG…KEAG), and 2308-2367 (GVRE…WDWE). Low complexity predominate over residues 738–759 (SGSPGHGSLPGSSRRRLLSSSL). The segment covering 773–782 (STYDQRREQD) has biased composition (basic and acidic residues). The span at 1039-1067 (KSRAGENEMDAEDAHHQREANDVDEDRPK) shows a compositional bias: basic and acidic residues. Residues 1153-1164 (LQNQQNAHTSRM) are compositionally biased toward polar residues. Basic and acidic residues-rich tracts occupy residues 1171–1181 (EGSREQEDRGR), 1277–1299 (RALRQDPGDSQKKRGEARGKSEP), 1341–1362 (GRIRDKSEAGDSVEARKVEKPG), and 1390–1407 (EDGKPAQEAVKDLPQEKQ). The span at 1615–1639 (ESQKDKEKMPGKSEIEDVTAWEKPE) shows a compositional bias: basic and acidic residues. 6 stretches are compositionally biased toward basic and acidic residues: residues 1840-1851 (AEQREKALEKGR), 1903-1920 (AEGHSLEATEKGDLRQDP), 1970-1979 (SHLDRQRPDQ), 2023-2054 (VTERIPVKGVSRQDGKGDSQEEKGRAPEKSEP), 2061-2070 (KKPEMADFRQ), and 2165-2180 (TEEHFSKAAAKPREQE). Low complexity predominate over residues 2326-2340 (PEPSLQEAESQSSSL).

This sequence belongs to the G-protein coupled receptor 3 family. In terms of assembly, homodimer. Associates with the R7 group RGS-GNB5 complexes, composed of an R7 group RGS subunit (RGS6, RGS7, RGS9 or RGS11) and GNB5, promoting their localization to the cell membrane and regulating the GTPase activator activity of R7 RGS proteins. Interacts with TRPM1. Interacts with GRM6. Interacts with EGFLAM; transsynaptic interaction is required for synaptic organization of photoreceptor cells. Expressed in the retina.

Its subcellular location is the cell membrane. The protein resides in the postsynaptic cell membrane. It localises to the cell projection. It is found in the dendrite. In terms of biological role, orphan receptor involved in vision. Required for signal transduction through retinal depolarizing bipolar cells. Acts as an atypical G-protein coupled receptor that recruits and regulates the R7 group RGS-GNB5 complexes instead of activating G proteins: promotes the GTPase activator activity of R7 RGS proteins, increasing the GTPase activity of G protein alpha subunits, thereby driving them into their inactive GDP-bound form. Associates with components of metabotropic signaling cascade in retina ON-bipolar neurons, such as TRPM1 and GRM6: may control the ability of the GRM6 cascade to gate TRPM1. The sequence is that of Probable G-protein coupled receptor 179 from Homo sapiens (Human).